A 545-amino-acid chain; its full sequence is Phenylalanine--tRNA ligase beta subunit (545 aa).

Residues 268–343 form the B5 domain; the sequence is FLHKIQNVRE…MSIGYNNLEP (76 aa). Mg(2+)-binding residues include D321, D327, E330, and D331.

It belongs to the phenylalanyl-tRNA synthetase beta subunit family. Type 2 subfamily. As to quaternary structure, tetramer of two alpha and two beta subunits. The cofactor is Mg(2+).

It is found in the cytoplasm. The enzyme catalyses tRNA(Phe) + L-phenylalanine + ATP = L-phenylalanyl-tRNA(Phe) + AMP + diphosphate + H(+). This is Phenylalanine--tRNA ligase beta subunit from Saccharolobus islandicus (strain L.S.2.15 / Lassen #1) (Sulfolobus islandicus).